A 700-amino-acid chain; its full sequence is uncharacterized protein (700 aa).

[4Fe-4S] cluster is bound by residues cysteine 307, cysteine 310, cysteine 314, and cysteine 558.

Belongs to the AOR/FOR family. The cofactor is [4Fe-4S] cluster. It depends on Mo-molybdopterin as a cofactor. Tungstopterin is required as a cofactor.

This is an uncharacterized protein from Escherichia coli (strain K12).